The primary structure comprises 249 residues: Small ribosomal subunit protein uS3 (249 aa).

Residues 23–94 form the KH type-2 domain; that stretch reads LNEFFTRELS…TVELYAEKVQ (72 aa). A phosphoserine mark is found at serine 32, serine 37, serine 106, and serine 141.

Belongs to the universal ribosomal protein uS3 family. In terms of assembly, component of the small ribosomal subunit (SSU). Mature yeast ribosomes consist of a small (40S) and a large (60S) subunit. The 40S small subunit contains 1 molecule of ribosomal RNA (18S rRNA) and at least 33 different proteins. The large 60S subunit contains 3 rRNA molecules (25S, 5.8S and 5S rRNA) and at least 46 different proteins.

It localises to the cytoplasm. Component of the ribosome, a large ribonucleoprotein complex responsible for the synthesis of proteins in the cell. The small ribosomal subunit (SSU) binds messenger RNAs (mRNAs) and translates the encoded message by selecting cognate aminoacyl-transfer RNA (tRNA) molecules. The large subunit (LSU) contains the ribosomal catalytic site termed the peptidyl transferase center (PTC), which catalyzes the formation of peptide bonds, thereby polymerizing the amino acids delivered by tRNAs into a polypeptide chain. The nascent polypeptides leave the ribosome through a tunnel in the LSU and interact with protein factors that function in enzymatic processing, targeting, and the membrane insertion of nascent chains at the exit of the ribosomal tunnel. In Schizosaccharomyces pombe (strain 972 / ATCC 24843) (Fission yeast), this protein is Small ribosomal subunit protein uS3 (rps3).